We begin with the raw amino-acid sequence, 246 residues long: MTQTFADQKRKTVETAEFTEDGRYKRKVRSFVLRTGRLSEFQRNMMNDNWGTLGLDYQTEPFDFAKIYGNDNPIVLEIGFGMGKSLVDMAFANPDKNYLGIEVHTPGVGACIAYAVEKGVTNLRVICHDATEILRDSIADGALGGLQLFFPDPWHKAKHHKRRIVQPHFVTQVIQKLGKNGFIHMATDWENYAEQMLEVLSANTDLVNTSKNGDYIPRPDFRPLTKFEARGYKLGHGVWDLYFVKK.

S-adenosyl-L-methionine-binding residues include glutamate 77, glutamate 102, aspartate 129, and aspartate 152. Aspartate 152 is an active-site residue. Residues lysine 156, aspartate 188, and 225 to 228 (TKFE) each bind substrate.

It belongs to the class I-like SAM-binding methyltransferase superfamily. TrmB family.

It catalyses the reaction guanosine(46) in tRNA + S-adenosyl-L-methionine = N(7)-methylguanosine(46) in tRNA + S-adenosyl-L-homocysteine. Its pathway is tRNA modification; N(7)-methylguanine-tRNA biosynthesis. Its function is as follows. Catalyzes the formation of N(7)-methylguanine at position 46 (m7G46) in tRNA. This is tRNA (guanine-N(7)-)-methyltransferase from Haemophilus influenzae (strain 86-028NP).